The sequence spans 136 residues: Histone H3-7 (136 aa).

The interval 1–43 (MARTKQTARKSTGGKAPRKQLATKAARKSAPATGGVKKPHRYR) is disordered. Arg-3 carries the post-translational modification Asymmetric dimethylarginine. Residue Arg-3 is modified to Citrulline; alternate. At Thr-4 the chain carries Phosphothreonine. Position 5 is an allysine; alternate (Lys-5). Lys-5 bears the N6,N6,N6-trimethyllysine; alternate mark. Lys-5 carries the post-translational modification N6,N6-dimethyllysine; alternate. Residue Lys-5 is modified to N6-(2-hydroxyisobutyryl)lysine; alternate. Lys-5 carries the post-translational modification N6-(beta-hydroxybutyryl)lysine; alternate. N6-acetyllysine; alternate is present on Lys-5. The residue at position 5 (Lys-5) is an N6-methyllysine; alternate. Position 6 is a 5-glutamyl dopamine; alternate (Gln-6). A 5-glutamyl serotonin; alternate modification is found at Gln-6. Thr-7 carries the post-translational modification Phosphothreonine. At Arg-9 the chain carries Citrulline; alternate. Position 9 is a symmetric dimethylarginine (Arg-9). Position 10 is an N6,N6,N6-trimethyllysine; alternate (Lys-10). Residue Lys-10 is modified to N6,N6-dimethyllysine; alternate. At Lys-10 the chain carries N6-(2-hydroxyisobutyryl)lysine; alternate. Position 10 is an N6-(beta-hydroxybutyryl)lysine; alternate (Lys-10). Position 10 is an N6-acetyllysine; alternate (Lys-10). Residue Lys-10 is modified to N6-methyllysine; alternate. An N6-lactoyllysine; alternate modification is found at Lys-10. At Ser-11 the chain carries ADP-ribosylserine; alternate. Residue Ser-11 is modified to Phosphoserine; alternate. Thr-12 is modified (phosphothreonine). Residue Lys-15 is modified to N6-(2-hydroxyisobutyryl)lysine; alternate. Lys-15 carries the N6-(beta-hydroxybutyryl)lysine; alternate modification. Lys-15 is modified (N6-acetyllysine; alternate). Lys-15 is modified (N6-lactoyllysine; alternate). An N6-glutaryllysine; alternate modification is found at Lys-15. The residue at position 15 (Lys-15) is an N6-succinyllysine; alternate. Arg-18 is modified (asymmetric dimethylarginine). A Citrulline; alternate modification is found at Arg-18. Lys-19 and Lys-24 each carry N6-(2-hydroxyisobutyryl)lysine; alternate. Residues Lys-19 and Lys-24 each carry the N6-(beta-hydroxybutyryl)lysine; alternate modification. An N6-acetyllysine; alternate mark is found at Lys-19 and Lys-24. 2 positions are modified to N6-methyllysine; alternate: Lys-19 and Lys-24. Lys-19 and Lys-24 each carry N6-lactoyllysine; alternate. Residues Lys-19 and Lys-24 each carry the N6-glutaryllysine; alternate modification. N6-butyryllysine; alternate is present on residues Lys-19 and Lys-24. Residue Arg-27 is modified to Citrulline. Position 28 is an N6,N6,N6-trimethyllysine; alternate (Lys-28). Residue Lys-28 is modified to N6,N6-dimethyllysine; alternate. Lys-28 bears the N6-(2-hydroxyisobutyryl)lysine; alternate mark. Lys-28 carries the post-translational modification N6-acetyllysine; alternate. Residue Lys-28 is modified to N6-methyllysine; alternate. Residue Lys-28 is modified to N6-lactoyllysine; alternate. Lys-28 bears the N6-glutaryllysine; alternate mark. Position 29 is an ADP-ribosylserine; alternate (Ser-29). At Ser-29 the chain carries Phosphoserine; alternate. At Lys-37 the chain carries N6,N6,N6-trimethyllysine; alternate. Position 37 is an N6,N6-dimethyllysine; alternate (Lys-37). Residue Lys-37 is modified to N6-(2-hydroxyisobutyryl)lysine; alternate. Lys-37 carries the N6-acetyllysine; alternate modification. Lys-37 is subject to N6-methyllysine; alternate. At Lys-38 the chain carries N6-methyllysine. Tyr-42 bears the Phosphotyrosine mark. Residue Lys-57 is modified to N6,N6,N6-trimethyllysine; alternate. N6-(2-hydroxyisobutyryl)lysine; alternate is present on Lys-57. Position 57 is an N6-(beta-hydroxybutyryl)lysine; alternate (Lys-57). Residue Lys-57 is modified to N6-acetyllysine; alternate. An N6-lactoyllysine; alternate modification is found at Lys-57. Lys-57 carries the N6-glutaryllysine; alternate modification. N6-succinyllysine; alternate is present on Lys-57. Lys-57 is modified (N6-methyllysine). Ser-58 carries the phosphoserine modification. N6-(2-hydroxyisobutyryl)lysine; alternate occurs at positions 65 and 80. Residues Lys-65 and Lys-80 each carry the N6-methyllysine; alternate modification. N6,N6,N6-trimethyllysine; alternate is present on Lys-80. N6,N6-dimethyllysine; alternate is present on Lys-80. Lys-80 is modified (N6-acetyllysine; alternate). An N6-lactoyllysine; alternate modification is found at Lys-80. Lys-80 is subject to N6-glutaryllysine; alternate. Position 80 is an N6-succinyllysine; alternate (Lys-80). A Phosphothreonine modification is found at Thr-81. Ser-87 bears the Phosphoserine mark. The residue at position 108 (Thr-108) is a Phosphothreonine. An N6-acetyllysine; alternate mark is found at Lys-116 and Lys-123. An N6-glutaryllysine; alternate mark is found at Lys-116 and Lys-123. The residue at position 123 (Lys-123) is an N6-(2-hydroxyisobutyryl)lysine; alternate. At Lys-123 the chain carries N6-methyllysine; alternate. N6-succinyllysine; alternate is present on Lys-123.

The protein belongs to the histone H3 family. The nucleosome is a histone octamer containing two molecules each of H2A, H2B, H3 and H4 assembled in one H3-H4 heterotetramer and two H2A-H2B heterodimers. The octamer wraps approximately 147 bp of DNA. During nucleosome assembly the chaperone ASF1A interacts with the histone H3-H4 heterodimer. Acetylation is generally linked to gene activation. Acetylation on Lys-10 (H3K9ac) impairs methylation at Arg-9 (H3R8me2s). Acetylation on Lys-19 (H3K18ac) and Lys-24 (H3K24ac) favors methylation at Arg-18 (H3R17me). Acetylation at Lys-123 (H3K122ac) by EP300/p300 plays a central role in chromatin structure: localizes at the surface of the histone octamer and stimulates transcription, possibly by promoting nucleosome instability. Post-translationally, citrullination at Arg-9 (H3R8ci) and/or Arg-18 (H3R17ci) by PADI4 impairs methylation and represses transcription. In terms of processing, asymmetric dimethylation at Arg-18 (H3R17me2a) by CARM1 is linked to gene activation. Symmetric dimethylation at Arg-9 (H3R8me2s) by PRMT5 is linked to gene repression. Asymmetric dimethylation at Arg-3 (H3R2me2a) by PRMT6 is linked to gene repression and is mutually exclusive with H3 Lys-5 methylation (H3K4me2 and H3K4me3). H3R2me2a is present at the 3' of genes regardless of their transcription state and is enriched on inactive promoters, while it is absent on active promoters. Methylation at Lys-5 (H3K4me), Lys-37 (H3K36me) and Lys-80 (H3K79me) are linked to gene activation. Methylation at Lys-5 (H3K4me) facilitates subsequent acetylation of H3 and H4. Methylation at Lys-80 (H3K79me) is associated with DNA double-strand break (DSB) responses and is a specific target for TP53BP1. Methylation at Lys-10 (H3K9me) and Lys-28 (H3K27me) are linked to gene repression. Methylation at Lys-10 (H3K9me) is a specific target for HP1 proteins (CBX1, CBX3 and CBX5) and prevents subsequent phosphorylation at Ser-11 (H3S10ph) and acetylation of H3 and H4. Methylation at Lys-5 (H3K4me) and Lys-80 (H3K79me) require preliminary monoubiquitination of H2B at 'Lys-120'. Methylation at Lys-10 (H3K9me) and Lys-28 (H3K27me) are enriched in inactive X chromosome chromatin. Monomethylation at Lys-57 (H3K56me1) by EHMT2/G9A in G1 phase promotes interaction with PCNA and is required for DNA replication. Post-translationally, phosphorylated at Thr-4 (H3T3ph) by HASPIN during prophase and dephosphorylated during anaphase. Phosphorylation at Ser-11 (H3S10ph) by AURKB is crucial for chromosome condensation and cell-cycle progression during mitosis and meiosis. In addition phosphorylation at Ser-11 (H3S10ph) by RPS6KA4 and RPS6KA5 is important during interphase because it enables the transcription of genes following external stimulation, like mitogens, stress, growth factors or UV irradiation and result in the activation of genes, such as c-fos and c-jun. Phosphorylation at Ser-11 (H3S10ph), which is linked to gene activation, prevents methylation at Lys-10 (H3K9me) but facilitates acetylation of H3 and H4. Phosphorylation at Ser-11 (H3S10ph) by AURKB mediates the dissociation of HP1 proteins (CBX1, CBX3 and CBX5) from heterochromatin. Phosphorylation at Ser-11 (H3S10ph) is also an essential regulatory mechanism for neoplastic cell transformation. Phosphorylated at Ser-29 (H3S28ph) by MAP3K20 isoform 1, RPS6KA5 or AURKB during mitosis or upon ultraviolet B irradiation. Phosphorylation at Thr-7 (H3T6ph) by PRKCB is a specific tag for epigenetic transcriptional activation that prevents demethylation of Lys-5 (H3K4me) by LSD1/KDM1A. At centromeres, specifically phosphorylated at Thr-12 (H3T11ph) from prophase to early anaphase, by DAPK3 and PKN1. Phosphorylation at Thr-12 (H3T11ph) by PKN1 or isoform M2 of PKM (PKM2) is a specific tag for epigenetic transcriptional activation that promotes demethylation of Lys-10 (H3K9me) by KDM4C/JMJD2C. Phosphorylation at Tyr-42 (H3Y41ph) by JAK2 promotes exclusion of CBX5 (HP1 alpha) from chromatin. In terms of processing, ubiquitinated. Lysine deamination at Lys-5 (H3K4all) to form allysine is mediated by LOXL2. Allysine formation by LOXL2 only takes place on H3K4me3 and results in gene repression. Post-translationally, butyrylation of histones marks active promoters and competes with histone acetylation. It is present during late spermatogenesis. In terms of processing, succinylation at Lys-80 (H3K79succ) by KAT2A takes place with a maximum frequency around the transcription start sites of genes. It gives a specific tag for epigenetic transcription activation. Desuccinylation at Lys-123 (H3K122succ) by SIRT7 in response to DNA damage promotes chromatin condensation and double-strand breaks (DSBs) repair. Serine ADP-ribosylation constitutes the primary form of ADP-ribosylation of proteins in response to DNA damage. Serine ADP-ribosylation at Ser-11 (H3S10ADPr) is mutually exclusive with phosphorylation at Ser-11 (H3S10ph) and impairs acetylation at Lys-10 (H3K9ac).

Its subcellular location is the nucleus. It is found in the chromosome. Its function is as follows. Core component of nucleosome. Nucleosomes wrap and compact DNA into chromatin, limiting DNA accessibility to the cellular machineries which require DNA as a template. Histones thereby play a central role in transcription regulation, DNA repair, DNA replication and chromosomal stability. DNA accessibility is regulated via a complex set of post-translational modifications of histones, also called histone code, and nucleosome remodeling. The protein is Histone H3-7 of Homo sapiens (Human).